The following is a 1010-amino-acid chain: Signal peptide, CUB and EGF-like domain-containing protein 2 (1010 aa).

An N-terminal signal peptide occupies residues 1 to 24 (MGAVWTVRLLCLFLLLLNTRQSAA). The region spanning 28–68 (NTDQCAEGSDACHIDAICQNTPTSYKCTCKTGFKGDGKHCE) is the EGF-like 1; calcium-binding domain. 8 disulfide bridges follow: Cys-32/Cys-45, Cys-39/Cys-54, Cys-56/Cys-67, Cys-73/Cys-85, Cys-81/Cys-94, Cys-96/Cys-109, Cys-115/Cys-126, and Cys-122/Cys-135. The region spanning 69–110 (DIDECDVEYNGGCVHECNNIPGNYRCTCLDGFHLAHDGHNCL) is the EGF-like 2; calcium-binding domain. An EGF-like 3; calcium-binding domain is found at 111–147 (DVDECVFNNGGCQHVCVNTMGSYECRCKQGFFLSDNQ). 2 consecutive EGF-like domains span residues 160–196 (CMNKEHGCGHICKESPKGGVACECRPGFELAKNQRGC) and 200–235 (CNHGNGGCQHICEDTEQGPICRCHVRYMLHADGRTC). The N-linked (GlcNAc...) asparagine glycan is linked to Asn-249. Residues 269–304 (CAVNNGGCDSTCKDTSTGVRCSCPVGFTLQPDGKSC) form the EGF-like 6 domain. One can recognise an EGF-like 7; calcium-binding domain in the interval 306-346 (DIDECELHNGGCDHYCRNTIGSFECSCRKGFKLLTDERSCQ). Disulfide bonds link Cys-310–Cys-321, Cys-317–Cys-330, Cys-332–Cys-345, Cys-351–Cys-361, Cys-357–Cys-370, Cys-372–Cys-384, Cys-390–Cys-401, Cys-397–Cys-410, and Cys-412–Cys-425. The 39-residue stretch at 347–385 (DIDECFFERTCDHTCVNSPGSFQCVCNKGYTLYGLAHCG) folds into the EGF-like 8; calcium-binding domain. One can recognise an EGF-like 9; calcium-binding domain in the interval 386–426 (DINECSFNNGGCEHTCENTMGSFGCHCRAGYKLHWNKKDCI). 4 N-linked (GlcNAc...) asparagine glycosylation sites follow: Asn-488, Asn-703, Asn-774, and Asn-803. Residues Cys-822 and Cys-848 are joined by a disulfide bond. The CUB domain occupies 822 to 934 (CGGELGEFTG…KGFQVPYVTY (113 aa)). Residues 860–869 (ILVVVPEIYL) form an interaction with the cholesterol-anchor of SHH region. A disulfide bridge connects residues Cys-875 and Cys-896. An N-linked (GlcNAc...) asparagine glycan is attached at Asn-982.

In terms of assembly, interacts with SHH via the cholesterol anchor of the dually lipid-modified SHH (ShhNp). Interacts with PTCH1. Forms homooligomers and heterooligomers with SCUBE1 and SCUBE3. Interacts with VEGFR2. Post-translationally, N-glycosylated.

It localises to the secreted. It is found in the cell surface. Functionally, lipid-binding protein required for SHH long-range signaling by binding to the dually lipid-modified SHH (ShhNp) and by promoting ShhNp mobilization, solubilization and release from the cell membrane. Acts by enhancing the proteolytic processing (shedding) of the lipid-modified N- and C- terminal of ShhNp at the cell surface. Synergizes with DISP1 to cause an increase in SHH secretion. Probable cell surface coreceptor for VEGFR2 involved in VEGFR2-mediated angiogenesis. The protein is Signal peptide, CUB and EGF-like domain-containing protein 2 (scube2) of Danio rerio (Zebrafish).